The following is a 337-amino-acid chain: Ornithine carbamoyltransferase (337 aa).

Carbamoyl phosphate-binding positions include 57-60 (STRT), Gln84, Arg108, and 135-138 (HPTQ). Residues Asn167, Asp231, and 235–236 (SM) contribute to the L-ornithine site. Carbamoyl phosphate is bound by residues 272–273 (CL) and Arg317.

The protein belongs to the aspartate/ornithine carbamoyltransferase superfamily. OTCase family.

It is found in the cytoplasm. The enzyme catalyses carbamoyl phosphate + L-ornithine = L-citrulline + phosphate + H(+). Its pathway is amino-acid degradation; L-arginine degradation via ADI pathway; carbamoyl phosphate from L-arginine: step 2/2. Its function is as follows. Reversibly catalyzes the transfer of the carbamoyl group from carbamoyl phosphate (CP) to the N(epsilon) atom of ornithine (ORN) to produce L-citrulline. This chain is Ornithine carbamoyltransferase, found in Streptococcus uberis (strain ATCC BAA-854 / 0140J).